Consider the following 75-residue polypeptide: Meucin-49 (75 aa).

The signal sequence occupies residues 1–22 (MNKKILLVIFIVTMLIVDEVNS).

This sequence belongs to the non-disulfide-bridged peptide (NDBP) superfamily. Long chain multifunctional peptide (group 2) family. Expressed by the venom gland.

The protein localises to the secreted. Insecticidal toxin and antimicrobial peptide with potent activity against both Gram-negative and -positive bacteria, as well as against fungi. Acts by disrupting bacterial membrane integrity. Shows broad-spectrum and highly potent bactericidal activities against the Gram-positive bacteria B.cereus, B.megaterium, B.subtilis, M.luteus, S.aureus, S.epidermidis, S.warneri, S.griseus, S.scabiei, S.mutans, S.salivarius, and S.sanguinis. Also exhibits a wide spectrum of activity against the Gram-negative bacteria A.faecalis, E.coli, P.aeruginosa, P.solanacearum, S.enterica, S.marcescens, and S.maltophilia. Also shows antimicrobial activities against the fungal strains Aspergillus flavus, A.fumigatus, A.nidulans, A.niger, Beauveria bassiana, and Saccharomyces cerevisiae. Its antibiotic activity is potentiated by other antibacterial peptides such as MeuNaTxbeta-4. Also induces cytolysis on mice, lizards and birds erythrocytes. This Mesobuthus eupeus (Lesser Asian scorpion) protein is Meucin-49.